The sequence spans 829 residues: DNA ligase (829 aa).

Residues 38–42 (DAEYD), 87–88 (SL), and glutamate 127 each bind NAD(+). Residue lysine 129 is the N6-AMP-lysine intermediate of the active site. NAD(+) is bound by residues arginine 150, glutamate 187, lysine 305, and lysine 329. Positions 455, 458, 473, and 479 each coordinate Zn(2+). Residues 534–564 (ETADKGSSENENGDAETVSGDLSKYNTQNGK) are disordered. A BRCT domain is found at 752 to 829 (GINKAVAGKT…SEAELLTLLC (78 aa)).

It belongs to the NAD-dependent DNA ligase family. LigA subfamily. The cofactor is Mg(2+). Mn(2+) serves as cofactor.

The enzyme catalyses NAD(+) + (deoxyribonucleotide)n-3'-hydroxyl + 5'-phospho-(deoxyribonucleotide)m = (deoxyribonucleotide)n+m + AMP + beta-nicotinamide D-nucleotide.. Functionally, DNA ligase that catalyzes the formation of phosphodiester linkages between 5'-phosphoryl and 3'-hydroxyl groups in double-stranded DNA using NAD as a coenzyme and as the energy source for the reaction. It is essential for DNA replication and repair of damaged DNA. The polypeptide is DNA ligase (Neisseria gonorrhoeae (strain ATCC 700825 / FA 1090)).